The following is a 395-amino-acid chain: Putative 8-amino-7-oxononanoate synthase (395 aa).

Residue Arg23 coordinates substrate. 110-111 (GY) is a binding site for pyridoxal 5'-phosphate. His135 is a substrate binding site. Residues Ser182, 207-210 (DEAH), and 239-242 (TFSK) contribute to the pyridoxal 5'-phosphate site. Lys242 carries the N6-(pyridoxal phosphate)lysine modification. Substrate is bound at residue Thr356.

This sequence belongs to the class-II pyridoxal-phosphate-dependent aminotransferase family. BioF subfamily. As to quaternary structure, homodimer. It depends on pyridoxal 5'-phosphate as a cofactor.

The enzyme catalyses 6-carboxyhexanoyl-[ACP] + L-alanine + H(+) = (8S)-8-amino-7-oxononanoate + holo-[ACP] + CO2. It functions in the pathway cofactor biosynthesis; biotin biosynthesis. Its function is as follows. Catalyzes the decarboxylative condensation of pimeloyl-[acyl-carrier protein] and L-alanine to produce 8-amino-7-oxononanoate (AON), [acyl-carrier protein], and carbon dioxide. This is Putative 8-amino-7-oxononanoate synthase (bioF) from Bacillus cereus (strain ZK / E33L).